The following is a 369-amino-acid chain: Ferredoxin--NADP reductase 2 (369 aa).

The disordered stretch occupies residues 1 to 21; that stretch reads MDLSIPNPVADATRQVEGGSP. FAD contacts are provided by Asp-58, Gln-66, Tyr-71, Val-111, Phe-146, Asp-311, and Thr-352.

The protein belongs to the ferredoxin--NADP reductase type 2 family. Homodimer. FAD serves as cofactor.

The catalysed reaction is 2 reduced [2Fe-2S]-[ferredoxin] + NADP(+) + H(+) = 2 oxidized [2Fe-2S]-[ferredoxin] + NADPH. This is Ferredoxin--NADP reductase 2 from Cupriavidus taiwanensis (strain DSM 17343 / BCRC 17206 / CCUG 44338 / CIP 107171 / LMG 19424 / R1) (Ralstonia taiwanensis (strain LMG 19424)).